A 253-amino-acid polypeptide reads, in one-letter code: Isopentenyl-diphosphate delta-isomerase IDI1 (253 aa).

K61 is a binding site for substrate. 2 residues coordinate Mg(2+): H65 and H76. The region spanning 74–224 (LLHRAFSVFL…SLVFTPWFKL (151 aa)) is the Nudix hydrolase domain. 2 residues coordinate substrate: Q94 and K99. C111 is an active-site residue. S112 is a substrate binding site. The short motif at 112 to 145 (SHPLHIPTETGSTLEDSIAGVKRAAQRKLEHELG) is the Nudix box element. Residues E174 and E176 each contribute to the Mg(2+) site. E176 is a catalytic residue.

It belongs to the IPP isomerase type 1 family. It depends on Mg(2+) as a cofactor.

The catalysed reaction is isopentenyl diphosphate = dimethylallyl diphosphate. The protein operates within isoprenoid biosynthesis; dimethylallyl diphosphate biosynthesis; dimethylallyl diphosphate from isopentenyl diphosphate: step 1/1. Functionally, isopentenyl-diphosphate delta-isomerase; part of the second module of ergosterol biosynthesis pathway that includes the middle steps of the pathway. IDI1 catalyzes the 1,3-allylic rearrangement of isopentenyl (IPP) to its highly electrophilic allylic isomer, dimethylallyl diphosphate (DMAPP). The second module is carried out in the vacuole and involves the formation of farnesyl diphosphate, which is also an important intermediate in the biosynthesis of ubiquinone, dolichol, heme and prenylated proteins. Activity by the mevalonate kinase ERG12 (FG05912) first converts mevalonate into 5-phosphomevalonate. 5-phosphomevalonate is then further converted to 5-diphosphomevalonate by the phosphomevalonate kinase ERG8 (FG09764). The diphosphomevalonate decarboxylase ERG19 (FG10424) then produces isopentenyl diphosphate. The isopentenyl-diphosphate delta-isomerase IDI1 (FG09722) then catalyzes the 1,3-allylic rearrangement of the homoallylic substrate isopentenyl (IPP) to its highly electrophilic allylic isomer, dimethylallyl diphosphate (DMAPP). Finally the farnesyl diphosphate synthase ERG20 (FG06784) catalyzes the sequential condensation of isopentenyl pyrophosphate with dimethylallyl pyrophosphate, and then with the resultant geranylpyrophosphate to the ultimate product farnesyl pyrophosphate. In Gibberella zeae (strain ATCC MYA-4620 / CBS 123657 / FGSC 9075 / NRRL 31084 / PH-1) (Wheat head blight fungus), this protein is Isopentenyl-diphosphate delta-isomerase IDI1.